The following is a 494-amino-acid chain: Alpha-amylase-related protein (494 aa).

An N-terminal signal peptide occupies residues 1–20 (MFKFALALTLCLAGASLSLA). Residue Gln-21 is modified to Pyrrolidone carboxylic acid. Cys-48 and Cys-104 are joined by a disulfide. Positions 118, 169, and 178 each coordinate Ca(2+). The cysteines at positions 157 and 171 are disulfide-linked. Arg-206 is a chloride binding site. Catalysis depends on Asp-208, which acts as the Nucleophile. His-212 lines the Ca(2+) pocket. The active-site Proton donor is Glu-245. The chloride site is built by Asn-308 and Arg-343. 3 disulfide bridges follow: Cys-376–Cys-382, Cys-418–Cys-441, and Cys-448–Cys-460.

Belongs to the glycosyl hydrolase 13 family. As to quaternary structure, monomer. Requires Ca(2+) as cofactor. It depends on chloride as a cofactor.

It is found in the secreted. The catalysed reaction is Endohydrolysis of (1-&gt;4)-alpha-D-glucosidic linkages in polysaccharides containing three or more (1-&gt;4)-alpha-linked D-glucose units.. The protein is Alpha-amylase-related protein (Amyrel) of Drosophila dossoui (Fruit fly).